The sequence spans 375 residues: Succinyl-diaminopimelate desuccinylase (375 aa).

His-66 contacts Zn(2+). Residue Asp-68 is part of the active site. Asp-99 contacts Zn(2+). The active-site Proton acceptor is Glu-130. Residues Glu-131, Glu-159, and His-345 each coordinate Zn(2+).

The protein belongs to the peptidase M20A family. DapE subfamily. Homodimer. Zn(2+) serves as cofactor. Co(2+) is required as a cofactor.

The catalysed reaction is N-succinyl-(2S,6S)-2,6-diaminopimelate + H2O = (2S,6S)-2,6-diaminopimelate + succinate. It functions in the pathway amino-acid biosynthesis; L-lysine biosynthesis via DAP pathway; LL-2,6-diaminopimelate from (S)-tetrahydrodipicolinate (succinylase route): step 3/3. Functionally, catalyzes the hydrolysis of N-succinyl-L,L-diaminopimelic acid (SDAP), forming succinate and LL-2,6-diaminopimelate (DAP), an intermediate involved in the bacterial biosynthesis of lysine and meso-diaminopimelic acid, an essential component of bacterial cell walls. This Xanthobacter autotrophicus (strain ATCC BAA-1158 / Py2) protein is Succinyl-diaminopimelate desuccinylase.